We begin with the raw amino-acid sequence, 316 residues long: HPr kinase/phosphorylase (316 aa).

Active-site residues include H143 and K164. 158–165 contacts ATP; that stretch reads GEAGSGKS. A Mg(2+)-binding site is contributed by S165. The active-site Proton acceptor; for phosphorylation activity. Proton donor; for dephosphorylation activity is the D182. An important for the catalytic mechanism of both phosphorylation and dephosphorylation region spans residues 206-215; sequence LEVRGLGVLN. Position 207 (E207) interacts with Mg(2+). The active site involves R251. Residues 272 to 277 are important for the catalytic mechanism of dephosphorylation; the sequence is PVMPGR.

The protein belongs to the HPrK/P family. In terms of assembly, homohexamer. Mg(2+) is required as a cofactor.

The enzyme catalyses [HPr protein]-L-serine + ATP = [HPr protein]-O-phospho-L-serine + ADP + H(+). It catalyses the reaction [HPr protein]-O-phospho-L-serine + phosphate + H(+) = [HPr protein]-L-serine + diphosphate. In terms of biological role, catalyzes the ATP- as well as the pyrophosphate-dependent phosphorylation of a specific serine residue in HPr, a phosphocarrier protein of the phosphoenolpyruvate-dependent sugar phosphotransferase system (PTS). HprK/P also catalyzes the pyrophosphate-producing, inorganic phosphate-dependent dephosphorylation (phosphorolysis) of seryl-phosphorylated HPr (P-Ser-HPr). This chain is HPr kinase/phosphorylase, found in Xanthomonas oryzae pv. oryzae (strain MAFF 311018).